Consider the following 211-residue polypeptide: FMN-dependent NADH:quinone oxidoreductase 3 (211 aa).

102–105 (MWNF) contacts FMN.

The protein belongs to the azoreductase type 1 family. Homodimer. It depends on FMN as a cofactor.

It catalyses the reaction 2 a quinone + NADH + H(+) = 2 a 1,4-benzosemiquinone + NAD(+). It carries out the reaction N,N-dimethyl-1,4-phenylenediamine + anthranilate + 2 NAD(+) = 2-(4-dimethylaminophenyl)diazenylbenzoate + 2 NADH + 2 H(+). Functionally, quinone reductase that provides resistance to thiol-specific stress caused by electrophilic quinones. In terms of biological role, also exhibits azoreductase activity. Catalyzes the reductive cleavage of the azo bond in aromatic azo compounds to the corresponding amines. In Bacillus anthracis, this protein is FMN-dependent NADH:quinone oxidoreductase 3.